Reading from the N-terminus, the 153-residue chain is Probable histone H2A.4 (153 aa).

Basic residues predominate over residues 1 to 12 (MDSGTKVKKGAA). Disordered stretches follow at residues 1–30 (MDSGTKVKKGAAGRRSGGGPKKKPVSRSVK) and 129–153 (KSEKAASTTKTPKSPSKATKSPKKS). Residues 133–147 (AASTTKTPKSPSKAT) show a composition bias toward low complexity. The SPKK motif signature appears at 149-152 (SPKK).

Belongs to the histone H2A family. The nucleosome is a histone octamer containing two molecules each of H2A, H2B, H3 and H4 assembled in one H3-H4 heterotetramer and two H2A-H2B heterodimers. The octamer wraps approximately 147 bp of DNA. In terms of processing, not ubiquitinated.

It localises to the nucleus. It is found in the chromosome. In terms of biological role, core component of nucleosome. Nucleosomes wrap and compact DNA into chromatin, limiting DNA accessibility to the cellular machineries which require DNA as a template. Histones thereby play a central role in transcription regulation, DNA repair, DNA replication and chromosomal stability. DNA accessibility is regulated via a complex set of post-translational modifications of histones, also called histone code, and nucleosome remodeling. This Arabidopsis thaliana (Mouse-ear cress) protein is Probable histone H2A.4.